A 272-amino-acid chain; its full sequence is Insulin-like growth factor-binding protein 1 (272 aa).

An N-terminal signal peptide occupies residues 1–25 (MPEFLTVVSWPFLILLSFQVRVVAG). The IGFBP N-terminal domain maps to 28-109 (QPWHCAPCTA…TRGQGACVLE (82 aa)). 6 disulfide bridges follow: cysteine 32-cysteine 59, cysteine 35-cysteine 61, cysteine 43-cysteine 62, cysteine 50-cysteine 65, cysteine 73-cysteine 86, and cysteine 80-cysteine 106. The interval 115 to 143 (TSSLSGSQHEEAKAAVASEDELAESPEMT) is disordered. A compositionally biased stretch (acidic residues) spans 132-143 (SEDELAESPEMT). Residues serine 139, serine 157, and serine 169 each carry the phosphoserine modification. Phosphothreonine is present on threonine 170. The residue at position 171 (tyrosine 171) is a Phosphotyrosine. The Thyroglobulin type-1 domain maps to 186–264 (KEPCQRELYK…SLETRGDPNC (79 aa)). 3 disulfides stabilise this stretch: cysteine 189–cysteine 219, cysteine 230–cysteine 241, and cysteine 243–cysteine 264. Serine 255 carries the post-translational modification Phosphoserine. Residues 259-261 (RGD) carry the Cell attachment site motif.

In terms of assembly, binds equally well IGF1 and IGF2. Interacts with integrin ITGA5:ITGB1. Interacts with VHL; this interaction inhibits HIF1A degradation.

It localises to the secreted. In terms of biological role, multifunctional protein that plays a critical role in regulating the availability of IGFs such as IGF1 and IGF2 to their receptors and thereby regulates IGF-mediated cellular processes including cell migration, proliferation, differentiation or apoptosis in a cell-type specific manner. Also plays a positive role in cell migration by interacting with integrin ITGA5:ITGB1 through its RGD motif. Mechanistically, binding to integrins leads to activation of focal adhesion kinase/PTK2 and stimulation of the mitogen-activated protein kinase (MAPK) pathway. Regulates cardiomyocyte apoptosis by suppressing HIF-1alpha/HIF1A ubiquitination and subsequent degradation. The protein is Insulin-like growth factor-binding protein 1 (Igfbp1) of Rattus norvegicus (Rat).